A 500-amino-acid chain; its full sequence is NAD(P)H-quinone oxidoreductase chain 4, chloroplastic (500 aa).

14 helical membrane-spanning segments follow: residues 4–24 (FPWL…IFLL), 37–57 (LCIC…HFQL), 87–107 (IGPI…AWPV), 111–131 (AQLF…SFSS), 134–154 (LLLF…LLSM), 167–187 (FILY…GIGL), 208–228 (ALEV…LPII), 242–262 (HYST…YGLV), 272–292 (AHCL…IYAA), 305–325 (IAYS…SLSD), 330–350 (GAIL…FLAG), 386–406 (LALP…GIIT), 416–436 (ILIA…SLSM), and 462–482 (LFVS…PDFV).

Belongs to the complex I subunit 4 family.

It localises to the plastid. It is found in the chloroplast thylakoid membrane. It carries out the reaction a plastoquinone + NADH + (n+1) H(+)(in) = a plastoquinol + NAD(+) + n H(+)(out). The enzyme catalyses a plastoquinone + NADPH + (n+1) H(+)(in) = a plastoquinol + NADP(+) + n H(+)(out). In Oenothera biennis (German evening primrose), this protein is NAD(P)H-quinone oxidoreductase chain 4, chloroplastic.